The primary structure comprises 330 residues: MVREKVKVSTSTRTRQWKCVESRTDSKRLYYGRFILSPLMKGQADTIGIAMRRALLGELEGTCITRAKSEKIPHEYSTIVGIQESVHEILMNLKEIVLRGNLYGTRNAFICAKGPGYVTAQDIILPPSVEIVDNTQHVASLTEPIDLCIGLQIERNRGYGIKTPKNFHDGSYPIDAVFMPVRNANHSIHCYGNDNEKQEILFLEIWTNGSLTPKEALHEASRNLIDLFIHFLHAKEENLHLENNQHDVTLHFFFPFHYRLVKLTKKKKEIALKYIFIDQSELPPRIYNCLKKSNIHTLLDLLNNSREDLMKMEHFRIEDVKQILGILEKK.

Residues 1 to 235 (MVREKVKVST…DLFIHFLHAK (235 aa)) are alpha N-terminal domain (alpha-NTD). An alpha C-terminal domain (alpha-CTD) region spans residues 270–330 (IALKYIFIDQ…KQILGILEKK (61 aa)).

Belongs to the RNA polymerase alpha chain family. In plastids the minimal PEP RNA polymerase catalytic core is composed of four subunits: alpha, beta, beta', and beta''. When a (nuclear-encoded) sigma factor is associated with the core the holoenzyme is formed, which can initiate transcription.

The protein localises to the plastid. It localises to the chloroplast. It carries out the reaction RNA(n) + a ribonucleoside 5'-triphosphate = RNA(n+1) + diphosphate. In terms of biological role, DNA-dependent RNA polymerase catalyzes the transcription of DNA into RNA using the four ribonucleoside triphosphates as substrates. The chain is DNA-directed RNA polymerase subunit alpha (rpoA) from Gossypium barbadense (Sea Island cotton).